Reading from the N-terminus, the 259-residue chain is MAQQVNEWLIALAVAFIRPLSLSLLLPLLKSGSLGAALLRNGVLMSLTFPILPIIYQQKIMMHIGKDYSWLGLVTGEVIIGFSIGFCAAVPFWAVDMAGFLLDTLRGATMGTIFNSTIEAETSLFGLLFSQFLCVIFFISGGMEFILNILYESYQYLPPGRTLLFDQQFLKYIQAEWRTLYQLCISFSLPAIICMVLADLALGLLNRSAQQLNVFFFSMPLKSILVLLTLLISFPYALHHYLVESDKFYIYLKDWFPSV.

6 helical membrane-spanning segments follow: residues 9–29 (LIALAVAFIRPLSLSLLLPLL), 35–55 (GAALLRNGVLMSLTFPILPII), 78–98 (VIIGFSIGFCAAVPFWAVDMA), 127–147 (LLFSQFLCVIFFISGGMEFIL), 185–205 (ISFSLPAIICMVLADLALGLL), and 214–234 (VFFFSMPLKSILVLLTLLISF).

This sequence belongs to the FliR/MopE/SpaR family.

It localises to the cell membrane. Functionally, part of a type III secretion system. In Salmonella typhimurium (strain LT2 / SGSC1412 / ATCC 700720), this protein is Secretion system apparatus protein SsaT (ssaT).